Here is a 440-residue protein sequence, read N- to C-terminus: GTPase Der (440 aa).

2 consecutive EngA-type G domains span residues 4-168 and 177-352; these read PVVA…PPEK and IKIA…GRHS. GTP contacts are provided by residues 10–17, 57–61, 120–123, 183–190, 230–234, and 295–298; these read GRPNVGKS, DTGGL, NKVE, DTAGM, and NKWD. The KH-like domain occupies 353–437; that stretch reads MRISTPGLNA…PIRFVLRKKT (85 aa).

It belongs to the TRAFAC class TrmE-Era-EngA-EngB-Septin-like GTPase superfamily. EngA (Der) GTPase family. Associates with the 50S ribosomal subunit.

GTPase that plays an essential role in the late steps of ribosome biogenesis. The chain is GTPase Der from Pelotomaculum thermopropionicum (strain DSM 13744 / JCM 10971 / SI).